The following is a 200-amino-acid chain: Serine/arginine-rich splicing factor RSZ22 (200 aa).

One can recognise an RRM domain in the interval 2-71 (SRVYVGNLDP…NGWRVEQSHN (70 aa)). A compositionally biased stretch (basic and acidic residues) spans 62–83 (NGWRVEQSHNRGERGGGGRGGD). 2 disordered regions span residues 62-97 (NGWR…RGGS) and 112-200 (RECR…RSRS). Gly residues predominate over residues 84–96 (RGGGGGGRGGRGG). The CCHC-type zinc finger occupies 99–116 (LKCYECGETGHFARECRN). A compositionally biased stretch (basic residues) spans 120–137 (TGRRRSKSRSRTPPRYRR). A phosphoserine mark is found at Ser138, Ser147, Ser152, Ser160, Ser162, Ser174, and Ser200. The segment covering 138–150 (SPSYGRRSYSPRA) has biased composition (low complexity). Residues 151–166 (RSPPPPRRRSPSPPPA) are compositionally biased toward pro residues.

The protein belongs to the splicing factor SR family. RSZ subfamily. In terms of assembly, component of the spliceosome. Interacts with AFC2, RS2Z33 and RNU1. Extensively phosphorylated on serine residues in the RS domain. Phosphorylated by AFC2. As to expression, expressed in primary and lateral roots, stems, petioles, abaxial and adaxial epidermis cells, trichomes, unopened flowers, anther filaments, anthers, stigma, pollen, pollen tube, ovule funiculi, integuments, embryo sac and developing seeds.

It is found in the nucleus speckle. Its subcellular location is the nucleus. The protein resides in the nucleolus. The protein localises to the nucleoplasm. It localises to the cytoplasm. Sequence-specific RNA-binding protein probably involved in pre-mRNA splicing. In vitro, can complement efficiently splicing-deficient mammalian SRSF7-depleted HeLa cell extract. In Arabidopsis thaliana (Mouse-ear cress), this protein is Serine/arginine-rich splicing factor RSZ22 (RSZ22).